The primary structure comprises 479 residues: ATP synthase subunit beta (479 aa).

160–167 (GGAGVGKT) contacts ATP.

Belongs to the ATPase alpha/beta chains family. F-type ATPases have 2 components, CF(1) - the catalytic core - and CF(0) - the membrane proton channel. CF(1) has five subunits: alpha(3), beta(3), gamma(1), delta(1), epsilon(1). CF(0) has three main subunits: a(1), b(2) and c(9-12). The alpha and beta chains form an alternating ring which encloses part of the gamma chain. CF(1) is attached to CF(0) by a central stalk formed by the gamma and epsilon chains, while a peripheral stalk is formed by the delta and b chains.

Its subcellular location is the cell inner membrane. It catalyses the reaction ATP + H2O + 4 H(+)(in) = ADP + phosphate + 5 H(+)(out). Its function is as follows. Produces ATP from ADP in the presence of a proton gradient across the membrane. The catalytic sites are hosted primarily by the beta subunits. The chain is ATP synthase subunit beta from Anaplasma phagocytophilum (strain HZ).